We begin with the raw amino-acid sequence, 289 residues long: Acetyl-coenzyme A carboxylase carboxyl transferase subunit beta (289 aa).

A CoA carboxyltransferase N-terminal domain is found at 28 to 289 (LWSKCPSCEA…ALLQKLPAAA (262 aa)). Residues Cys32, Cys35, Cys51, and Cys54 each coordinate Zn(2+). A C4-type zinc finger spans residues 32 to 54 (CPSCEAVLYATDLENNLQVCPKC).

It belongs to the AccD/PCCB family. As to quaternary structure, acetyl-CoA carboxylase is a heterohexamer composed of biotin carboxyl carrier protein (AccB), biotin carboxylase (AccC) and two subunits each of ACCase subunit alpha (AccA) and ACCase subunit beta (AccD). Zn(2+) serves as cofactor.

Its subcellular location is the cytoplasm. It catalyses the reaction N(6)-carboxybiotinyl-L-lysyl-[protein] + acetyl-CoA = N(6)-biotinyl-L-lysyl-[protein] + malonyl-CoA. It functions in the pathway lipid metabolism; malonyl-CoA biosynthesis; malonyl-CoA from acetyl-CoA: step 1/1. Functionally, component of the acetyl coenzyme A carboxylase (ACC) complex. Biotin carboxylase (BC) catalyzes the carboxylation of biotin on its carrier protein (BCCP) and then the CO(2) group is transferred by the transcarboxylase to acetyl-CoA to form malonyl-CoA. This is Acetyl-coenzyme A carboxylase carboxyl transferase subunit beta from Dechloromonas aromatica (strain RCB).